Reading from the N-terminus, the 1038-residue chain is Eukaryotic translation initiation factor 3 subunit A (1038 aa).

Residues 92–121 are a coiled coil; the sequence is LKKFIELAEKKVTEAQAKADEIQSSLESAA. Residues 339 to 523 form the PCI domain; sequence MTKAVSFVLL…GVLTFDTDVF (185 aa). Residues 611 to 899 adopt a coiled-coil conformation; sequence IDKKKEAATD…QKQREEEAEA (289 aa). Basic and acidic residues-rich tracts occupy residues 621–632 and 800–901; these read ALQRKQREEETR and RHEE…EARR. 2 disordered regions span residues 621-641 and 800-1038; these read ALQR…QQLQ and RHEE…QQGQ. Low complexity-rich tracts occupy residues 943–952 and 976–993; these read KEAAGGAAPE and GASA…AAPS. The segment covering 1002 to 1019 has biased composition (polar residues); sequence DSGSSTPPSRTQTPATTS.

Belongs to the eIF-3 subunit A family. Component of the eukaryotic translation initiation factor 3 (eIF-3) complex.

It is found in the cytoplasm. RNA-binding component of the eukaryotic translation initiation factor 3 (eIF-3) complex, which is involved in protein synthesis of a specialized repertoire of mRNAs and, together with other initiation factors, stimulates binding of mRNA and methionyl-tRNAi to the 40S ribosome. The eIF-3 complex specifically targets and initiates translation of a subset of mRNAs involved in cell proliferation. This is Eukaryotic translation initiation factor 3 subunit A (tif32) from Aspergillus oryzae (strain ATCC 42149 / RIB 40) (Yellow koji mold).